Consider the following 950-residue polypeptide: Protocadherin alpha-8 (950 aa).

An N-terminal signal peptide occupies residues 1–29 (MVYHWRGDLGSWRLLLLLLLLAAWKVGSG). Cadherin domains are found at residues 30-133 (QLHY…PPVF), 157-242 (ASDA…APNF), 243-350 (EQSE…VPEI), 351-455 (ALTS…APAF), 456-565 (AQPE…APAL), and 581-678 (VPRS…APKA). The Extracellular segment spans residues 30–697 (QLHYSVPEEA…GPEAALVDVN (668 aa)). N-linked (GlcNAc...) asparagine glycosylation is found at asparagine 257 and asparagine 265. Asparagine 548 carries N-linked (GlcNAc...) asparagine glycosylation. A helical transmembrane segment spans residues 698–718 (VYLIIAICAVSSLLVLTLLLY). At 719–950 (TALRCSALPT…GNSTTDNSDQ (232 aa)) the chain is on the cytoplasmic side. PXXP repeat units follow at residues 774–777 (PCLP), 799–802 (PRQP), 832–835 (PGGP), 873–876 (PGNP), and 891–894 (PGSP). A 5 X 4 AA repeats of P-X-X-P region spans residues 774 to 894 (PCLPPDLGSV…PDKFIIPGSP (121 aa)). A disordered region spans residues 831-950 (GPGGPDQQWP…GNSTTDNSDQ (120 aa)). A compositionally biased stretch (basic and acidic residues) spans 909-923 (DKSDFITFGKKEETK).

Its subcellular location is the cell membrane. In terms of biological role, potential calcium-dependent cell-adhesion protein. May be involved in the establishment and maintenance of specific neuronal connections in the brain. This is Protocadherin alpha-8 (PCDHA8) from Pan troglodytes (Chimpanzee).